The chain runs to 423 residues: Flavohemoprotein B (423 aa).

A Globin domain is found at 1–136 (MLSQKSIQII…VAQAFMDAEE (136 aa)). Residue H83 participates in heme b binding. Catalysis depends on charge relay system residues Y93 and E135. The tract at residues 149–423 (WKDTREFVVD…LRGVKNIIEN (275 aa)) is reductase. Residues 150–268 (KDTREFVVDR…SVPAGDFVVN (119 aa)) enclose the FAD-binding FR-type domain. Residues Y188 and 212 to 215 (RHYS) contribute to the FAD site. 281–286 (GVGINP) is a binding site for NADP(+). Residue 400–403 (LFGP) participates in FAD binding.

This sequence belongs to the globin family. Two-domain flavohemoproteins subfamily. It in the C-terminal section; belongs to the flavoprotein pyridine nucleotide cytochrome reductase family. The cofactor is FAD. Heme b serves as cofactor.

Its subcellular location is the cytoplasm. The enzyme catalyses 2 nitric oxide + NADPH + 2 O2 = 2 nitrate + NADP(+) + H(+). It catalyses the reaction 2 nitric oxide + NADH + 2 O2 = 2 nitrate + NAD(+) + H(+). In terms of biological role, is involved in NO detoxification in an aerobic process, termed nitric oxide dioxygenase (NOD) reaction that utilizes O(2) and NAD(P)H to convert NO to nitrate, which protects the cell from various noxious nitrogen compounds. Therefore, plays a central role in the inducible response to nitrosative stress. Functionally, in the presence of oxygen and NADH, it has NADH oxidase activity, which leads to the generation of superoxide and H(2)O(2). Under anaerobic conditions, it also exhibits nitric oxide reductase and FAD reductase activities. However, all these reactions are much lower than NOD activity. The polypeptide is Flavohemoprotein B (fhbB) (Dictyostelium discoideum (Social amoeba)).